The following is a 359-amino-acid chain: Peptide chain release factor 1 (359 aa).

The residue at position 236 (Gln-236) is an N5-methylglutamine.

This sequence belongs to the prokaryotic/mitochondrial release factor family. Methylated by PrmC. Methylation increases the termination efficiency of RF1.

It is found in the cytoplasm. Functionally, peptide chain release factor 1 directs the termination of translation in response to the peptide chain termination codons UAG and UAA. The protein is Peptide chain release factor 1 of Streptococcus mutans serotype c (strain ATCC 700610 / UA159).